A 226-amino-acid chain; its full sequence is MKFKALVIDIDGTITCKNRELHLGAVKKMRTLNVPVVLATGNILCYARTASRLIGLGGAVIAENGGAVTVRYDVNGIFEGSLEECEKAFSFLSQHFKLTKLDPTYRKTEIALRRDFDLEEARSLLETQPFDIELVDTKYAIHIKSIKINKGIGLQKLAGMMGFEAEDFVAIGDSANDAEMFEAAGFGIAVANGDERVKEVANYVTEASFGDGAVEAIEFLESNGWI.

The active-site Nucleophile is Asp9. Mg(2+)-binding residues include Asp9 and Asp11. Lys150 contributes to the substrate binding site. Mg(2+) contacts are provided by Asp173 and Asp177.

Belongs to the archaeal SPP-like hydrolase family. Requires Mg(2+) as cofactor.

The catalysed reaction is 2-phosphoglycolate + H2O = glycolate + phosphate. Its function is as follows. Catalyzes the dephosphorylation of 2-phosphoglycolate. The polypeptide is Phosphoglycolate phosphatase (Methanosarcina mazei (strain ATCC BAA-159 / DSM 3647 / Goe1 / Go1 / JCM 11833 / OCM 88) (Methanosarcina frisia)).